The following is a 281-amino-acid chain: Acetyl-coenzyme A carboxylase carboxyl transferase subunit beta 2 (281 aa).

In terms of domain architecture, CoA carboxyltransferase N-terminal spans 26–281 (LLTRCPVCHE…TITQGGHQDV (256 aa)). C30, C33, C48, and C51 together coordinate Zn(2+). A C4-type zinc finger spans residues 30-51 (CPVCHEDCYTQDLGEFKVCPHC).

The protein belongs to the AccD/PCCB family. As to quaternary structure, acetyl-CoA carboxylase is a heterohexamer composed of biotin carboxyl carrier protein (AccB), biotin carboxylase (AccC) and two subunits each of ACCase subunit alpha (AccA) and ACCase subunit beta (AccD). It depends on Zn(2+) as a cofactor.

It is found in the cytoplasm. It catalyses the reaction N(6)-carboxybiotinyl-L-lysyl-[protein] + acetyl-CoA = N(6)-biotinyl-L-lysyl-[protein] + malonyl-CoA. It functions in the pathway lipid metabolism; malonyl-CoA biosynthesis; malonyl-CoA from acetyl-CoA: step 1/1. In terms of biological role, component of the acetyl coenzyme A carboxylase (ACC) complex. Biotin carboxylase (BC) catalyzes the carboxylation of biotin on its carrier protein (BCCP) and then the CO(2) group is transferred by the transcarboxylase to acetyl-CoA to form malonyl-CoA. This Lactiplantibacillus plantarum (strain JDM1) (Lactobacillus plantarum) protein is Acetyl-coenzyme A carboxylase carboxyl transferase subunit beta 2.